The primary structure comprises 398 residues: 1-deoxy-D-xylulose 5-phosphate reductoisomerase (398 aa).

NADPH contacts are provided by Thr11, Gly12, Ser13, Ile14, Arg38, Asn39, and Asn125. Position 126 (Lys126) interacts with 1-deoxy-D-xylulose 5-phosphate. Glu127 is a binding site for NADPH. A Mn(2+)-binding site is contributed by Asp151. The 1-deoxy-D-xylulose 5-phosphate site is built by Ser152, Glu153, Ser179, and His202. Residue Glu153 coordinates Mn(2+). Residue Gly208 coordinates NADPH. 4 residues coordinate 1-deoxy-D-xylulose 5-phosphate: Ser215, Asn220, Lys221, and Glu224. Residue Glu224 participates in Mn(2+) binding.

This sequence belongs to the DXR family. The cofactor is Mg(2+). Requires Mn(2+) as cofactor.

It catalyses the reaction 2-C-methyl-D-erythritol 4-phosphate + NADP(+) = 1-deoxy-D-xylulose 5-phosphate + NADPH + H(+). Its pathway is isoprenoid biosynthesis; isopentenyl diphosphate biosynthesis via DXP pathway; isopentenyl diphosphate from 1-deoxy-D-xylulose 5-phosphate: step 1/6. Functionally, catalyzes the NADPH-dependent rearrangement and reduction of 1-deoxy-D-xylulose-5-phosphate (DXP) to 2-C-methyl-D-erythritol 4-phosphate (MEP). This chain is 1-deoxy-D-xylulose 5-phosphate reductoisomerase, found in Burkholderia mallei (strain NCTC 10247).